A 633-amino-acid chain; its full sequence is Probable potassium transport system protein Kup (633 aa).

Helical transmembrane passes span 21–41, 61–81, 107–127, 145–165, 176–196, 219–239, 255–275, 293–313, 345–365, 371–391, 402–422, and 427–447; these read LAVG…LYAF, LVSL…VLFL, TAVL…DAMI, PTLS…LFAI, FFGP…IMHI, GFLG…AEAL, WFVL…ALVL, ALLP…QAVI, IFLP…VLSF, LATA…IMAF, LPMA…FLGA, and IHDG…IMWT.

This sequence belongs to the HAK/KUP transporter (TC 2.A.72) family.

It is found in the cell inner membrane. The catalysed reaction is K(+)(in) + H(+)(in) = K(+)(out) + H(+)(out). Transport of potassium into the cell. Likely operates as a K(+):H(+) symporter. The sequence is that of Probable potassium transport system protein Kup from Rhizobium rhizogenes (strain K84 / ATCC BAA-868) (Agrobacterium radiobacter).